The chain runs to 301 residues: tRNA uridine(34) hydroxylase (301 aa).

Residues 121–215 (RSDDVVLIDT…YLEEVPAENS (95 aa)) form the Rhodanese domain. Cys-175 (cysteine persulfide intermediate) is an active-site residue.

This sequence belongs to the TrhO family.

It catalyses the reaction uridine(34) in tRNA + AH2 + O2 = 5-hydroxyuridine(34) in tRNA + A + H2O. Catalyzes oxygen-dependent 5-hydroxyuridine (ho5U) modification at position 34 in tRNAs. This chain is tRNA uridine(34) hydroxylase, found in Ruegeria pomeroyi (strain ATCC 700808 / DSM 15171 / DSS-3) (Silicibacter pomeroyi).